A 454-amino-acid polypeptide reads, in one-letter code: Chromosomal replication initiator protein DnaA (454 aa).

Positions 1-79 (MSLCLWKQCL…NSPFIKFKVY (79 aa)) are domain I, interacts with DnaA modulators. Residues 79–117 (YQTSKEKKFKKNILQKIQNLNAKPIWDKIPIFKKSSHRS) form a domain II region. The tract at residues 118–334 (NINKKHSFEN…GALNRVIVNA (217 aa)) is domain III, AAA+ region. 4 residues coordinate ATP: Gly-162, Gly-164, Lys-165, and Thr-166. Positions 335–454 (NFTHRSITVE…FSNLIRTLSV (120 aa)) are domain IV, binds dsDNA.

It belongs to the DnaA family. In terms of assembly, oligomerizes as a right-handed, spiral filament on DNA at oriC.

The protein localises to the cytoplasm. In terms of biological role, plays an essential role in the initiation and regulation of chromosomal replication. ATP-DnaA binds to the origin of replication (oriC) to initiate formation of the DNA replication initiation complex once per cell cycle. Binds the DnaA box (a 9 base pair repeat at the origin) and separates the double-stranded (ds)DNA. Forms a right-handed helical filament on oriC DNA; dsDNA binds to the exterior of the filament while single-stranded (ss)DNA is stabiized in the filament's interior. The ATP-DnaA-oriC complex binds and stabilizes one strand of the AT-rich DNA unwinding element (DUE), permitting loading of DNA polymerase. After initiation quickly degrades to an ADP-DnaA complex that is not apt for DNA replication. Binds acidic phospholipids. The chain is Chromosomal replication initiator protein DnaA from Buchnera aphidicola subsp. Schizaphis graminum (strain Sg).